The following is a 623-amino-acid chain: MATVLSRALKLPGKKSPDLGEYDPLTQADSDESEDDLVLNIQKNGGVKNGKSPPEEMQDPDSDVEVGMTKQHTSERAPEGYPAEAAGSLEQKAAPSLMPYLRTAVFLLTVVISMILVLVCAFLIPCPPRDLHNTWNHNLGQGAGGVLSPLELCDVNGDGLPDILIVFTALMNASVMGVSTPSVTVVALSGMNGSTLWSIQLPEETRSVQCKGLSLGSPAEPICLVTGTAKFLSLLSASTGKTIWTLNSIHLSDGILAAPAATLPDVDGDGIRDIVVLALKETQPDVFFVLVSGKTGAALGGPVKYNVIGEGKVIGPQVHITSRGAIYILFGFGNVQAIALRDIFTQARNRDSFPMMLHQEEPEWEKRRSVNLSELIDIYSGGVDFLQTIKAPDTNCSNLLITTKEGLILLQGQDLEPRWTLEIQNISSQPVLGYFSADQTLDFMLQAQTGNGKKKVVVVDGKSGLPVWKQELPWQKQQLDALSVMTLDKKSVFLFWADEAQPVLHSLHPGPRSERPGLHHLYLLHPVFPTVLLDLTNATDKVIASAVGINDLQKDAFHITVTTTATSEKQPGFLSVSKLGLKWAMMTQGRMVWLKDTTTPKISRGEVRRFLARLKFVDFPHKL.

Positions 1 to 82 (MATVLSRALK…TSERAPEGYP (82 aa)) are disordered. Residues 104-124 (AVFLLTVVISMILVLVCAFLI) traverse the membrane as a helical segment.

This sequence belongs to the FAM234 family.

The protein localises to the membrane. Its subcellular location is the golgi outpost. It localises to the cytoplasm. The protein resides in the cytoskeleton. It is found in the microtubule organizing center. This is Protein FAM234B (FAM234B) from Gallus gallus (Chicken).